The primary structure comprises 119 residues: Phosphoribosyl-AMP cyclohydrolase (119 aa).

D77 is a binding site for Mg(2+). C78 serves as a coordination point for Zn(2+). D79 and D81 together coordinate Mg(2+). Zn(2+)-binding residues include C94 and C101.

It belongs to the PRA-CH family. In terms of assembly, homodimer. It depends on Mg(2+) as a cofactor. Zn(2+) serves as cofactor.

The protein localises to the cytoplasm. It catalyses the reaction 1-(5-phospho-beta-D-ribosyl)-5'-AMP + H2O = 1-(5-phospho-beta-D-ribosyl)-5-[(5-phospho-beta-D-ribosylamino)methylideneamino]imidazole-4-carboxamide. It participates in amino-acid biosynthesis; L-histidine biosynthesis; L-histidine from 5-phospho-alpha-D-ribose 1-diphosphate: step 3/9. Functionally, catalyzes the hydrolysis of the adenine ring of phosphoribosyl-AMP. This Cereibacter sphaeroides (strain KD131 / KCTC 12085) (Rhodobacter sphaeroides) protein is Phosphoribosyl-AMP cyclohydrolase.